The following is a 688-amino-acid chain: Glycine--tRNA ligase beta subunit (688 aa).

Belongs to the class-II aminoacyl-tRNA synthetase family. As to quaternary structure, tetramer of two alpha and two beta subunits.

It is found in the cytoplasm. The enzyme catalyses tRNA(Gly) + glycine + ATP = glycyl-tRNA(Gly) + AMP + diphosphate. This chain is Glycine--tRNA ligase beta subunit, found in Syntrophomonas wolfei subsp. wolfei (strain DSM 2245B / Goettingen).